Reading from the N-terminus, the 144-residue chain is Maximins 1/H1 (144 aa).

Positions 1–18 (MNFKYIVAVSFLLASAYA) are cleaved as a signal peptide. A propeptide spanning residues 19-43 (RSEENDEQSLSQRDVLEEESLREIR) is cleaved from the precursor. At N70 the chain carries Asparagine amide. Positions 74 to 123 (TAEEHEVMKRLEAVMRDLDSLDYPEEAAERETRSFNQEEIANLFTKKEKR) are excised as a propeptide. The residue at position 143 (L143) is a Leucine amide.

The protein belongs to the bombinin family. Expressed by the skin glands.

It localises to the secreted. Antibacterial peptide with amphipathic alpha-helical structure that has activity against both Gram-positive and Gram-negative bacteria. Also shows antimicrobial activity against the fungus C.albicans, but not against A.flavus nor P.uticale. It has little hemolytic activity. It possess a significant cytotoxicity against tumor cell lines, but does not possess a significant anti-HIV activity. Also shows high spermicidal activity. Its function is as follows. antibacterial peptide with activity against both Gram-positive and Gram-negative bacteria. Also shows antimicrobial activity against the fungus C.albicans. In addition, shows strong hemolytic activity. This is Maximins 1/H1 from Bombina maxima (Giant fire-bellied toad).